We begin with the raw amino-acid sequence, 365 residues long: Glycosyltransferase 8 domain-containing protein 1 (365 aa).

The Cytoplasmic segment spans residues methionine 1 to arginine 4. Residues arginine 5–leucine 22 form a helical; Signal-anchor for type II membrane protein membrane-spanning segment. Topologically, residues histidine 23–lysine 365 are lumenal. 4 N-linked (GlcNAc...) asparagine glycosylation sites follow: asparagine 102, asparagine 181, asparagine 245, and asparagine 253.

The protein belongs to the glycosyltransferase 8 family.

It localises to the membrane. This is Glycosyltransferase 8 domain-containing protein 1 (glt8d1) from Danio rerio (Zebrafish).